The primary structure comprises 389 residues: P2X purinoceptor 6 (389 aa).

The Cytoplasmic portion of the chain corresponds to methionine 1–arginine 45. The helical transmembrane segment at leucine 46–tyrosine 66 threads the bilayer. Over glutamine 67–alanine 335 the chain is Extracellular. Disulfide bonds link cysteine 129–cysteine 179, cysteine 140–cysteine 163, and cysteine 146–cysteine 173. Asparagine 167, asparagine 197, and asparagine 212 each carry an N-linked (GlcNAc...) asparagine glycan. Intrachain disulfides connect cysteine 230–cysteine 240 and cysteine 274–cysteine 283. A helical membrane pass occupies residues leucine 336 to leucine 356. Over cysteine 357–serine 389 the chain is Cytoplasmic.

Belongs to the P2X receptor family. In terms of assembly, unlike most P2RXs, P2RX6 does not seem to form homotrimers. P2RX6 are likely to form as obligate heteromers with other P2RXs subunits. Forms heterotrimer with P2RX2 with a variable subunit stoichiometry determined by subunit expression levels. Forms heterotrimer with P2RX4; functional differences between homomeric P2RX4 and P2RX4/6 heterotrimer are minor. Forms a P2RX2/P2RX4/P2RX6 heterotrimer. Interacts with SF3A1; resulting in a reduction of the splicing activity. In terms of processing, N-glycosylated. N-linked glycosylation can affect trafficking to the membrane and function. In terms of tissue distribution, predominantly expressed in skeletal muscle. Also expressed in lung.

The protein localises to the cell membrane. Its subcellular location is the endoplasmic reticulum. It is found in the nucleus. It localises to the nucleus inner membrane. It carries out the reaction Ca(2+)(in) = Ca(2+)(out). Functionally, acts as a modulatory subunit rather than a functional channel. Unlike other P2XRs members, P2RX6 does not seem to form functional homotrimers. P2RX6 requires the presence of P2RX4 or P2RX2 to form functional heterotrimeric receptors at the plasma membrane. P2RX6 can be translocated to the nucleus, where it interacts with the splicing factor (SF3A1), to reduce the incidence of mRNA splicing. May function as a nuclear regulator of post-transcriptional modifications in neurons. The chain is P2X purinoceptor 6 (P2rx6) from Mus musculus (Mouse).